A 416-amino-acid polypeptide reads, in one-letter code: 4-hydroxy-3-methylbut-2-en-1-yl diphosphate synthase (flavodoxin) (416 aa).

4 residues coordinate [4Fe-4S] cluster: Cys-304, Cys-307, Cys-350, and Glu-357.

The protein belongs to the IspG family. [4Fe-4S] cluster is required as a cofactor.

It catalyses the reaction (2E)-4-hydroxy-3-methylbut-2-enyl diphosphate + oxidized [flavodoxin] + H2O + 2 H(+) = 2-C-methyl-D-erythritol 2,4-cyclic diphosphate + reduced [flavodoxin]. It participates in isoprenoid biosynthesis; isopentenyl diphosphate biosynthesis via DXP pathway; isopentenyl diphosphate from 1-deoxy-D-xylulose 5-phosphate: step 5/6. Functionally, converts 2C-methyl-D-erythritol 2,4-cyclodiphosphate (ME-2,4cPP) into 1-hydroxy-2-methyl-2-(E)-butenyl 4-diphosphate. This Rhizobium etli (strain CIAT 652) protein is 4-hydroxy-3-methylbut-2-en-1-yl diphosphate synthase (flavodoxin).